A 279-amino-acid polypeptide reads, in one-letter code: 3-methyl-2-oxobutanoate hydroxymethyltransferase (279 aa).

The Mg(2+) site is built by aspartate 43 and aspartate 82. 3-methyl-2-oxobutanoate-binding positions include 43 to 44 (DS), aspartate 82, and lysine 112. Glutamate 114 is a binding site for Mg(2+). Glutamate 181 serves as the catalytic Proton acceptor.

It belongs to the PanB family. As to quaternary structure, homodecamer; pentamer of dimers. Requires Mg(2+) as cofactor.

The protein localises to the cytoplasm. The enzyme catalyses 3-methyl-2-oxobutanoate + (6R)-5,10-methylene-5,6,7,8-tetrahydrofolate + H2O = 2-dehydropantoate + (6S)-5,6,7,8-tetrahydrofolate. It functions in the pathway cofactor biosynthesis; (R)-pantothenate biosynthesis; (R)-pantoate from 3-methyl-2-oxobutanoate: step 1/2. Catalyzes the reversible reaction in which hydroxymethyl group from 5,10-methylenetetrahydrofolate is transferred onto alpha-ketoisovalerate to form ketopantoate. This is 3-methyl-2-oxobutanoate hydroxymethyltransferase from Bacillus anthracis (strain A0248).